A 507-amino-acid polypeptide reads, in one-letter code: Carnosic acid synthase (507 aa).

Residues 6 to 23 form a helical membrane-spanning segment; sequence VFSLAFLAAWFIVVFPRW. Residue cysteine 450 participates in heme binding.

The protein belongs to the cytochrome P450 family. The cofactor is heme. Expressed in glandular trichomes of young leaves.

It localises to the membrane. It carries out the reaction 11-hydroxyferruginol + 3 reduced [NADPH--hemoprotein reductase] + 3 O2 = carnosate + 3 oxidized [NADPH--hemoprotein reductase] + 4 H2O + 4 H(+). The catalysed reaction is miltiradiene + 2 reduced [NADPH--hemoprotein reductase] + 2 O2 = miltiradien-20-al + 2 oxidized [NADPH--hemoprotein reductase] + 3 H2O + 2 H(+). The enzyme catalyses ferruginol + 3 reduced [NADPH--hemoprotein reductase] + 3 O2 = pisiferate + 3 oxidized [NADPH--hemoprotein reductase] + 4 H2O + 4 H(+). It functions in the pathway secondary metabolite biosynthesis; terpenoid biosynthesis. Monooxygenase involved in the biosynthesis of carnosate, a potent antioxidant labdane-related diterpene natural product. Catalyzes the oxidation of 11-hydroxyferruginol to produce carnosate. Mediates the conversion of miltiradien into miltiradien-20-al. Also involved in the production of pisiferic acid and derivative products from ferruginol. This is Carnosic acid synthase from Rosmarinus officinalis (Rosemary).